Consider the following 178-residue polypeptide: Large ribosomal subunit protein uL6 (178 aa).

It belongs to the universal ribosomal protein uL6 family. In terms of assembly, part of the 50S ribosomal subunit.

In terms of biological role, this protein binds to the 23S rRNA, and is important in its secondary structure. It is located near the subunit interface in the base of the L7/L12 stalk, and near the tRNA binding site of the peptidyltransferase center. This chain is Large ribosomal subunit protein uL6, found in Leuconostoc mesenteroides subsp. mesenteroides (strain ATCC 8293 / DSM 20343 / BCRC 11652 / CCM 1803 / JCM 6124 / NCDO 523 / NBRC 100496 / NCIMB 8023 / NCTC 12954 / NRRL B-1118 / 37Y).